A 122-amino-acid chain; its full sequence is Large ribosomal subunit protein uL18 (122 aa).

The protein belongs to the universal ribosomal protein uL18 family. As to quaternary structure, part of the 50S ribosomal subunit; part of the 5S rRNA/L5/L18/L25 subcomplex. Contacts the 5S and 23S rRNAs.

In terms of biological role, this is one of the proteins that bind and probably mediate the attachment of the 5S RNA into the large ribosomal subunit, where it forms part of the central protuberance. This Dictyoglomus turgidum (strain DSM 6724 / Z-1310) protein is Large ribosomal subunit protein uL18.